Consider the following 91-residue polypeptide: Acylphosphatase (91 aa).

The Acylphosphatase-like domain maps to 4-91 (RAIVTIKGLV…GEFDDFDVRY (88 aa)). Catalysis depends on residues R19 and N37.

The protein belongs to the acylphosphatase family.

The enzyme catalyses an acyl phosphate + H2O = a carboxylate + phosphate + H(+). In Geobacter sulfurreducens (strain ATCC 51573 / DSM 12127 / PCA), this protein is Acylphosphatase (acyP).